Consider the following 159-residue polypeptide: UPF0336 protein MAP_4107 (159 aa).

It belongs to the UPF0336 family.

This is UPF0336 protein MAP_4107 from Mycolicibacterium paratuberculosis (strain ATCC BAA-968 / K-10) (Mycobacterium paratuberculosis).